The chain runs to 301 residues: Dihydroorotate dehydrogenase B (NAD(+)), catalytic subunit (301 aa).

Residues serine 21 and lysine 45–serine 46 contribute to the FMN site. Substrate is bound by residues lysine 45, asparagine 69–leucine 73, and asparagine 125. Asparagine 125 is an FMN binding site. Residue cysteine 128 is the Nucleophile of the active site. Residues lysine 163 and isoleucine 187 each contribute to the FMN site. A substrate-binding site is contributed by asparagine 188–threonine 189. FMN-binding positions include glycine 213, glycine 239–glycine 240, and glycine 261–threonine 262.

This sequence belongs to the dihydroorotate dehydrogenase family. Type 1 subfamily. As to quaternary structure, heterotetramer of 2 PyrK and 2 PyrD type B subunits. Requires FMN as cofactor.

Its subcellular location is the cytoplasm. The enzyme catalyses (S)-dihydroorotate + NAD(+) = orotate + NADH + H(+). It participates in pyrimidine metabolism; UMP biosynthesis via de novo pathway; orotate from (S)-dihydroorotate (NAD(+) route): step 1/1. Functionally, catalyzes the conversion of dihydroorotate to orotate with NAD(+) as electron acceptor. The polypeptide is Dihydroorotate dehydrogenase B (NAD(+)), catalytic subunit (pyrD) (Thermoplasma volcanium (strain ATCC 51530 / DSM 4299 / JCM 9571 / NBRC 15438 / GSS1)).